A 600-amino-acid polypeptide reads, in one-letter code: NADH-quinone oxidoreductase subunit C/D (600 aa).

The interval 1–190 is NADH dehydrogenase I subunit C; sequence MVNNMTDLTA…SPFELTKAKQ (190 aa). The interval 214–600 is NADH dehydrogenase I subunit D; it reads DFMFLNLGPN…IDFVMSDVDR (387 aa).

The protein in the N-terminal section; belongs to the complex I 30 kDa subunit family. In the C-terminal section; belongs to the complex I 49 kDa subunit family. In terms of assembly, NDH-1 is composed of 13 different subunits. Subunits NuoB, CD, E, F, and G constitute the peripheral sector of the complex.

It is found in the cell inner membrane. It carries out the reaction a quinone + NADH + 5 H(+)(in) = a quinol + NAD(+) + 4 H(+)(out). In terms of biological role, NDH-1 shuttles electrons from NADH, via FMN and iron-sulfur (Fe-S) centers, to quinones in the respiratory chain. The immediate electron acceptor for the enzyme in this species is believed to be ubiquinone. Couples the redox reaction to proton translocation (for every two electrons transferred, four hydrogen ions are translocated across the cytoplasmic membrane), and thus conserves the redox energy in a proton gradient. The sequence is that of NADH-quinone oxidoreductase subunit C/D from Escherichia coli O6:H1 (strain CFT073 / ATCC 700928 / UPEC).